The chain runs to 715 residues: Integrator complex subunit 13 (715 aa).

Disordered regions lie at residues 572 to 612 and 626 to 659; these read KPPE…SERI and AEVI…SKGP. A Nuclear localization signal (NLS) motif is present at residues 581–591; that stretch reads KRGRKREDKEE. Residues 658–703 form a cleavage module binding motif (CMBM) region; that stretch reads GPMSLLSLWSSRINTANSRKHQEFVGRLNSVNNKAELYQHLKEENG.

It belongs to the Integrator subunit 13 family. Component of the Integrator complex, composed of core subunits INTS1, INTS2, INTS3, INTS4, INTS5, INTS6, INTS7, INTS8, INTS9/RC74, INTS10, INTS11/CPSF3L, INTS12, INTS13, INTS14 and INTS15. The core complex associates with protein phosphatase 2A subunits PPP2CA and PPP2R1A, to form the Integrator-PP2A (INTAC) complex. INTS13 is part of the tail subcomplex, composed of INTS10, INTS13, INTS14 and INTS15.

It is found in the nucleus. Its subcellular location is the cytoplasm. Its function is as follows. Component of the integrator complex, a multiprotein complex that terminates RNA polymerase II (Pol II) transcription in the promoter-proximal region of genes. The integrator complex provides a quality checkpoint during transcription elongation by driving premature transcription termination of transcripts that are unfavorably configured for transcriptional elongation: the complex terminates transcription by (1) catalyzing dephosphorylation of the C-terminal domain (CTD) of Pol II subunit POLR2A/RPB1 and SUPT5H/SPT5, (2) degrading the exiting nascent RNA transcript via endonuclease activity and (3) promoting the release of Pol II from bound DNA. The integrator complex is also involved in terminating the synthesis of non-coding Pol II transcripts, such as enhancer RNAs (eRNAs), small nuclear RNAs (snRNAs), telomerase RNAs and long non-coding RNAs (lncRNAs). Within the integrator complex, INTS13 is part of the integrator tail module and acts as a platform for the recruitment of transcription factors at promoters. Plays a role in gastrulation and early embryogenesis. The sequence is that of Integrator complex subunit 13 from Xenopus laevis (African clawed frog).